Here is a 477-residue protein sequence, read N- to C-terminus: V-type ATP synthase beta chain (477 aa).

It belongs to the ATPase alpha/beta chains family.

Produces ATP from ADP in the presence of a proton gradient across the membrane. The V-type beta chain is a regulatory subunit. This Anaeromyxobacter dehalogenans (strain 2CP-1 / ATCC BAA-258) protein is V-type ATP synthase beta chain.